A 157-amino-acid polypeptide reads, in one-letter code: Ubiquitin-like protein 4A (157 aa).

The 76-residue stretch at methionine 1–lysine 76 folds into the Ubiquitin-like domain. A Glycyl lysine isopeptide (Lys-Gly) (interchain with G-Cter in ubiquitin) cross-link involves residue lysine 48. A Phosphoserine modification is found at serine 90. The required and sufficient for interaction with BAG6 stretch occupies residues tryptophan 96–leucine 138.

In terms of assembly, component of the BAG6/BAT3 complex, at least composed of BAG6, UBL4A and GET4/TRC35. Interacts with BAG6; the interaction is direct and required for UBL4A protein stability. Interacts with USP13; may be indirect via BAG6. Polyubiquitinated. Ubiquitination by AMFR and deubiquitination by USP13 may regulate the interaction between the BAG6/BAT complex and SGTA and therefore may regulate client proteins fate.

The protein localises to the cytoplasm. It is found in the cytosol. Its subcellular location is the nucleus. In terms of biological role, as part of a cytosolic protein quality control complex, the BAG6/BAT3 complex, maintains misfolded and hydrophobic patches-containing proteins in a soluble state and participates in their proper delivery to the endoplasmic reticulum or alternatively can promote their sorting to the proteasome where they undergo degradation. The BAG6/BAT3 complex is involved in the post-translational delivery of tail-anchored/type II transmembrane proteins to the endoplasmic reticulum membrane. Recruited to ribosomes, it interacts with the transmembrane region of newly synthesized tail-anchored proteins and together with SGTA and ASNA1 mediates their delivery to the endoplasmic reticulum. Client proteins that cannot be properly delivered to the endoplasmic reticulum are ubiquitinated and sorted to the proteasome. Similarly, the BAG6/BAT3 complex also functions as a sorting platform for proteins of the secretory pathway that are mislocalized to the cytosol either delivering them to the proteasome for degradation or to the endoplasmic reticulum. The BAG6/BAT3 complex also plays a role in the endoplasmic reticulum-associated degradation (ERAD), a quality control mechanism that eliminates unwanted proteins of the endoplasmic reticulum through their retrotranslocation to the cytosol and their targeting to the proteasome. It maintains these retrotranslocated proteins in an unfolded yet soluble state condition in the cytosol to ensure their proper delivery to the proteasome. This is Ubiquitin-like protein 4A (UBL4A) from Callithrix jacchus (White-tufted-ear marmoset).